The primary structure comprises 205 residues: Orotate phosphoribosyltransferase (205 aa).

Position 116–124 (116–124) interacts with 5-phospho-alpha-D-ribose 1-diphosphate; it reads EDIITTGGS. Orotate is bound by residues threonine 120 and arginine 148.

It belongs to the purine/pyrimidine phosphoribosyltransferase family. PyrE subfamily. Homodimer. Requires Mg(2+) as cofactor.

The catalysed reaction is orotidine 5'-phosphate + diphosphate = orotate + 5-phospho-alpha-D-ribose 1-diphosphate. The protein operates within pyrimidine metabolism; UMP biosynthesis via de novo pathway; UMP from orotate: step 1/2. Functionally, catalyzes the transfer of a ribosyl phosphate group from 5-phosphoribose 1-diphosphate to orotate, leading to the formation of orotidine monophosphate (OMP). The sequence is that of Orotate phosphoribosyltransferase from Wolinella succinogenes (strain ATCC 29543 / DSM 1740 / CCUG 13145 / JCM 31913 / LMG 7466 / NCTC 11488 / FDC 602W) (Vibrio succinogenes).